Consider the following 353-residue polypeptide: Guanine nucleotide-binding protein subunit alpha (353 aa).

G2 is lipidated: N-myristoyl glycine. C3 carries the S-palmitoyl cysteine lipid modification. The G-alpha domain occupies 33–353; it reads NEIKMLLLGA…QLHLRECGLL (321 aa). The G1 motif stretch occupies residues 36–49; it reads KMLLLGAGESGKST. GTP contacts are provided by E44, S45, G46, K47, S48, T49, D150, L175, T181, G203, N269, K270, D272, and A325. A Mg(2+)-binding site is contributed by S48. The interval 173 to 181 is G2 motif; that stretch reads DILRSRVKT. Mg(2+) is bound at residue T181. The interval 196 to 205 is G3 motif; the sequence is YKLFDVGGQR. Residues 265–272 are G4 motif; that stretch reads ILFLNKID. The tract at residues 323 to 328 is G5 motif; that stretch reads TCATDT.

The protein belongs to the G-alpha family. G(q) subfamily. As to quaternary structure, g proteins are composed of 3 units; alpha, beta and gamma. The alpha chain contains the guanine nucleotide binding site. It depends on Mg(2+) as a cofactor.

Functionally, guanine nucleotide-binding proteins (G proteins) are involved as modulators or transducers in various transmembrane signaling systems. The protein is Guanine nucleotide-binding protein subunit alpha (CGP1) of Coprinellus congregatus (Inky cap fungus).